A 648-amino-acid polypeptide reads, in one-letter code: MRNDIADPEGPPRKGRLREEGMAALTLGALGVVFGDIGTSPIYAFREALGQAAEDGIVAGEILGVLSLALWALILVVTCKYVLFLMRADNNGEGGVLALMTLAQRSTRRRRTLVMALGAIGAALFYGDGVITPALSVLSAVEGLKTIPGLEHSVSRGEILLITSAILIGLFLMQARGTRIVGRLFGPVCLVWFVTIGGIGLIHIADQPAILAALLPHNGVLFMANHGVAGMFVMGAVFLTVTGAEALTADMGHFGAKPIRTGWLAIVFPALALNYLGQGAFALHRLEVASARGVEFVNQDWFFLMAPGLARIPLVILATCATVIASQAVITGAYSLTRQAIQLGLLPRLKIRQTSEHAAGQIYLPTITMLLFVGVMVLVLGFGSSSAMAAAYGVSVSGTMVVTTCLAFLVVRRSWGWGWPLTVAVIVPLLLLDLFFFGANILRIYEGGWVPLIVAGGVGLLIVTWVRGRKLLLAIDQSQAIELEELARMLRARPPERVPGMAIFLSSGMEAAPSALLHNLKHNKILHERNLALTINTVNQPAVPAAQRLDMTNIDENFTRAVLNYGFMESPDIPRDLAFALRHGDNKLEPMQTSYFIGRSTLRPSKHSGMPFWQDLLFIFLYRNASDPTDFFRIPPNRVVELGSQTTI.

The next 12 helical transmembrane spans lie at 25–45 (LTLG…IYAF), 57–77 (IVAG…ILVV), 113–133 (LVMA…VITP), 153–173 (SVSR…LFLM), 184–204 (LFGP…LIHI), 219–239 (GVLF…AVFL), 263–283 (WLAI…AFAL), 312–332 (IPLV…VITG), 362–382 (IYLP…VLGF), 391–411 (AYGV…FLVV), 417–437 (WGWP…LFFF), and 446–466 (EGGW…VTWV).

The protein belongs to the HAK/KUP transporter (TC 2.A.72) family.

Its subcellular location is the cell inner membrane. The catalysed reaction is K(+)(in) + H(+)(in) = K(+)(out) + H(+)(out). Transport of potassium into the cell. Likely operates as a K(+):H(+) symporter. The chain is Probable potassium transport system protein Kup 1 from Rhizorhabdus wittichii (strain DSM 6014 / CCUG 31198 / JCM 15750 / NBRC 105917 / EY 4224 / RW1) (Sphingomonas wittichii).